Consider the following 94-residue polypeptide: Putative membrane protein insertion efficiency factor (94 aa).

It belongs to the UPF0161 family.

The protein resides in the cell inner membrane. Functionally, could be involved in insertion of integral membrane proteins into the membrane. The chain is Putative membrane protein insertion efficiency factor from Albidiferax ferrireducens (strain ATCC BAA-621 / DSM 15236 / T118) (Rhodoferax ferrireducens).